The chain runs to 672 residues: DNA ligase (672 aa).

NAD(+)-binding positions include 32 to 36 (DEKYD), 82 to 83 (SL), and Glu113. Lys115 serves as the catalytic N6-AMP-lysine intermediate. Positions 136, 173, 290, and 314 each coordinate NAD(+). Cys408, Cys411, Cys427, and Cys433 together coordinate Zn(2+). Residues 592-672 (DNNNTLFRKK…EFLNIINVYL (81 aa)) enclose the BRCT domain.

This sequence belongs to the NAD-dependent DNA ligase family. LigA subfamily. Requires Mg(2+) as cofactor. Mn(2+) is required as a cofactor.

It carries out the reaction NAD(+) + (deoxyribonucleotide)n-3'-hydroxyl + 5'-phospho-(deoxyribonucleotide)m = (deoxyribonucleotide)n+m + AMP + beta-nicotinamide D-nucleotide.. Functionally, DNA ligase that catalyzes the formation of phosphodiester linkages between 5'-phosphoryl and 3'-hydroxyl groups in double-stranded DNA using NAD as a coenzyme and as the energy source for the reaction. It is essential for DNA replication and repair of damaged DNA. The protein is DNA ligase of Buchnera aphidicola subsp. Baizongia pistaciae (strain Bp).